A 484-amino-acid polypeptide reads, in one-letter code: Polyamine oxidase 3 (484 aa).

Residues glutamate 47, arginine 55, valine 236, and glutamate 423 each contribute to the FAD site. Positions serine 482 to leucine 484 match the Microbody targeting signal motif.

The protein belongs to the flavin monoamine oxidase family. The cofactor is FAD. In terms of tissue distribution, widely expressed.

Its subcellular location is the peroxisome. The catalysed reaction is spermine + O2 + H2O = 3-aminopropanal + spermidine + H2O2. It catalyses the reaction N(1)-acetylspermine + O2 + H2O = 3-acetamidopropanal + spermidine + H2O2. The enzyme catalyses norspermine + O2 + H2O = norspermidine + 3-aminopropanal + H2O2. It carries out the reaction spermidine + O2 + H2O = 3-aminopropanal + putrescine + H2O2. The catalysed reaction is thermospermine + O2 + H2O = 3-aminopropanal + spermidine + H2O2. It participates in amine and polyamine degradation; spermine degradation. It functions in the pathway amine and polyamine degradation; spermidine degradation. Its function is as follows. Flavoenzyme involved in polyamine back-conversion. Catalyzes the oxidation of the secondary amino group of polyamines, such as spermine, spermidine and their acetyl derivatives. Substrate preference is spermidine &gt; norspermine &gt; thermospermine &gt; N(1)-acetylspermine &gt; spermine. No activity detected when putrescine is used as substrate. Plays an important role in the regulation of polyamine intracellular concentration. This chain is Polyamine oxidase 3, found in Oryza sativa subsp. japonica (Rice).